The primary structure comprises 619 residues: ATP-dependent zinc metalloprotease FtsH (619 aa).

Residues 1 to 5 (MKYFK) lie on the Cytoplasmic side of the membrane. Residues 6 to 26 (GISFYIIIFILILVIITFFTA) traverse the membrane as a helical segment. Over 27–110 (TDNPPKMSYS…VTQPPQPPWW (84 aa)) the chain is Extracellular. A helical transmembrane segment spans residues 111-131 (VSMLPTVGLVIILILIWFFFI). Over 132 to 619 (QQSQGGGGGN…GSSQTPQLEG (488 aa)) the chain is Cytoplasmic. Position 204-211 (204-211 (GPPGTGKT)) interacts with ATP. Histidine 426 serves as a coordination point for Zn(2+). The active site involves glutamate 427. Zn(2+)-binding residues include histidine 430 and aspartate 502.

The protein in the central section; belongs to the AAA ATPase family. This sequence in the C-terminal section; belongs to the peptidase M41 family. As to quaternary structure, homohexamer. The cofactor is Zn(2+).

It is found in the cell membrane. In terms of biological role, acts as a processive, ATP-dependent zinc metallopeptidase for both cytoplasmic and membrane proteins. Plays a role in the quality control of integral membrane proteins. The polypeptide is ATP-dependent zinc metalloprotease FtsH (Ruminiclostridium cellulolyticum (strain ATCC 35319 / DSM 5812 / JCM 6584 / H10) (Clostridium cellulolyticum)).